Consider the following 221-residue polypeptide: MAKNKFNQSWLHDHINDPYVKLAQREGYRARAAYKLKEIDEQDKLIKPGQVIVDLGAAPGSWSQYVRNKLAASPRAKDGRIDGAIVAIDILPMEAIADVTFIQGDFREDEVFRQLEEIVLEVSGGGKVDLVLSDMAPNLSGVASADAARMEHIAELAVEFAMAHLKPEGALLIKCFHGSGYSQIVEMFKRHFKIVAPRKPKASRDKSSETFLLGRQLKHPG.

Residues G60, W62, D89, D105, and D134 each coordinate S-adenosyl-L-methionine. The active-site Proton acceptor is the K174. Residues 199-221 (KPKASRDKSSETFLLGRQLKHPG) are disordered.

This sequence belongs to the class I-like SAM-binding methyltransferase superfamily. RNA methyltransferase RlmE family.

The protein localises to the cytoplasm. It catalyses the reaction uridine(2552) in 23S rRNA + S-adenosyl-L-methionine = 2'-O-methyluridine(2552) in 23S rRNA + S-adenosyl-L-homocysteine + H(+). Specifically methylates the uridine in position 2552 of 23S rRNA at the 2'-O position of the ribose in the fully assembled 50S ribosomal subunit. The polypeptide is Ribosomal RNA large subunit methyltransferase E (Ralstonia pickettii (strain 12J)).